The primary structure comprises 447 residues: Probable glycosyltransferase 7 (447 aa).

The interval 1–31 is disordered; it reads MRATTGARHLHPPWRRGLRHHRQSTMPPRAS. Over 1–37 the chain is Cytoplasmic; the sequence is MRATTGARHLHPPWRRGLRHHRQSTMPPRASRGRLAD. The span at 8–23 shows a compositional bias: basic residues; that stretch reads RHLHPPWRRGLRHHRQ. A helical; Signal-anchor for type II membrane protein membrane pass occupies residues 38–60; sequence AALFTAGAVLGSVLLLTLASPFS. Residues 61–447 are Lumenal-facing; the sequence is SSSSPSSGVG…LPFDHPTQTA (387 aa). N-linked (GlcNAc...) asparagine glycans are attached at residues N285 and N329.

This sequence belongs to the glycosyltransferase 34 family.

Its subcellular location is the golgi apparatus membrane. Functionally, probable glycosyltransferase that may be involved in the biosynthesis of xyloglucan. The polypeptide is Probable glycosyltransferase 7 (Oryza sativa subsp. indica (Rice)).